The chain runs to 402 residues: Putative polyketide beta-ketoacyl synthase 2 (402 aa).

Disordered stretches follow at residues 1–30 (MTPV…WAPR) and 188–222 (VEPR…FDRD). The 400-residue stretch at 1–400 (MTPVAVTGMG…GFNSALVVRA (400 aa)) folds into the Ketosynthase family 3 (KS3) domain. Residues 192–205 (SAPGAGSPSSPAGG) are compositionally biased toward low complexity.

Belongs to the thiolase-like superfamily. Beta-ketoacyl-ACP synthases family.

Its pathway is antifungal biosynthesis; monensin biosynthesis. This Streptomyces virginiae (Streptomyces cinnamonensis) protein is Putative polyketide beta-ketoacyl synthase 2.